A 328-amino-acid polypeptide reads, in one-letter code: PIN2/TERF1-interacting telomerase inhibitor 1 (328 aa).

Disordered regions lie at residues Met1–Lys28, Phe147–Thr177, and Leu189–Glu307. The 47-residue stretch at Asp26 to Asn72 folds into the G-patch domain. The span at Ser161–Ser174 shows a compositional bias: low complexity. Basic and acidic residues predominate over residues His235 to Leu261. The tract at residues Ser254 to Lys328 is telomerase inhibitory domain (TID). Phosphoserine is present on residues Ser270 and Ser273. Positions Arg287–Arg297 match the TBM motif. Residues Lys292–Gln303 are compositionally biased toward basic residues.

Belongs to the PINX1 family. In terms of assembly, interacts with MCRS1, TERT, TERF1, NCL/nucleolin, and the telomerase RNA. In terms of processing, cleaved by enterovirus protease 3C to promote apoptosis. Ubiquitous; expressed at low levels. Not detectable in a number of hepatocarcinoma cell lines.

The protein localises to the nucleus. Its subcellular location is the nucleolus. The protein resides in the chromosome. It localises to the telomere. It is found in the centromere. The protein localises to the kinetochore. Microtubule-binding protein essential for faithful chromosome segregation. Mediates TRF1 and TERT accumulation in nucleolus and enhances TRF1 binding to telomeres. Inhibits telomerase activity. May inhibit cell proliferation and act as tumor suppressor. The protein is PIN2/TERF1-interacting telomerase inhibitor 1 (PINX1) of Homo sapiens (Human).